A 1335-amino-acid chain; its full sequence is Membrane-associated phosphatidylinositol transfer protein 2 (1335 aa).

Disordered regions lie at residues 32–51 and 262–341; these read ETHG…YTDG and EEGP…SEEE. The span at 275-286 shows a compositional bias: polar residues; sequence KDQASGTTSDPG. Residues 299 to 319 are compositionally biased toward low complexity; the sequence is KQWSTSSKSSRSSKRGASPSR. A phosphoserine mark is found at Ser334, Ser338, Ser365, and Ser586. Residues 606–657 are disordered; that stretch reads HCSGGSGGGGSGGSSLESSRHLSRSNIDIPRSNGTEDSRRQLPRKRSDSSTY. Residues 609-618 are compositionally biased toward gly residues; it reads GGSGGGGSGG. Phosphoserine is present on Ser630. Residues 639 to 653 show a composition bias toward basic and acidic residues; sequence GTEDSRRQLPRKRSD. Residues Ser686, Ser687, and Ser688 each carry the phosphoserine modification. The DDHD domain maps to 701 to 949; sequence FDFEIADLFL…VSFLLRQVMR (249 aa). Omega-N-methylarginine is present on Arg814. Residues 861 to 880 are disordered; the sequence is ALPPPSPTTQGPRARARQVS. At Ser1263 the chain carries Phosphoserine. The segment at 1282–1313 is disordered; that stretch reads TISAQPSGPSHRHDRTQTQMDSEQRGQRSMSV. Residues 1298 to 1313 are compositionally biased toward polar residues; that stretch reads QTQMDSEQRGQRSMSV.

This sequence belongs to the PtdIns transfer protein family. PI transfer class IIA subfamily. As to quaternary structure, interacts with CPNE4 (via VWFA domain). Interacts with PTK2B via its C-terminus. As to expression, detected in retina and in the dentate gyrus of the cerebellum.

The protein resides in the endomembrane system. It is found in the cytoplasm. The protein localises to the cytoskeleton. Functionally, catalyzes the transfer of phosphatidylinositol and phosphatidylcholine between membranes (in vitro). Binds calcium ions. This is Membrane-associated phosphatidylinositol transfer protein 2 (Pitpnm2) from Mus musculus (Mouse).